The following is a 341-amino-acid chain: MNLSDFDYFLPDELIAQEPLPERDMSRLMVVRLDGKEFEHRLFKDIVDYLNPGDALVINETKVIPARLVGRKEGTGARIELLLLRRLDSSRWEALVRPGKKAPKGTAVVFGEGLLACRILDSTAYGGRVVEFSFEGLFEEVLERVGVMPLPPYIKKPLLDQQRYQTIYARQAGSAAAPTAGLHFSPGLLSRIREMGVAVIPVLLHVGLGTFRPVRTEDIRRHRMHAEYYEITEEASRAIAETRARGGRVIAVGTTTTRCLESAAEEGGRVRPGSGWTEIFIYPGYRFKVIDGLVTNFHLPKSTLIMMVAALAGRERILAAYREAVGLRYRFFSFGDAMLII.

This sequence belongs to the QueA family. In terms of assembly, monomer.

Its subcellular location is the cytoplasm. It carries out the reaction 7-aminomethyl-7-carbaguanosine(34) in tRNA + S-adenosyl-L-methionine = epoxyqueuosine(34) in tRNA + adenine + L-methionine + 2 H(+). Its pathway is tRNA modification; tRNA-queuosine biosynthesis. Functionally, transfers and isomerizes the ribose moiety from AdoMet to the 7-aminomethyl group of 7-deazaguanine (preQ1-tRNA) to give epoxyqueuosine (oQ-tRNA). This Pelotomaculum thermopropionicum (strain DSM 13744 / JCM 10971 / SI) protein is S-adenosylmethionine:tRNA ribosyltransferase-isomerase.